A 2135-amino-acid polypeptide reads, in one-letter code: Plexin-B1 (2135 aa).

The N-terminal stretch at 1-19 (MPALGPALLQALWAGWVLT) is a signal peptide. Positions 20-479 (LQPLPPTAFT…TQSTLLKVPV (460 aa)) constitute a Sema domain. Topologically, residues 20–1490 (LQPLPPTAFT…SPGAFPVAAQ (1471 aa)) are extracellular. N-linked (GlcNAc...) asparagine glycosylation occurs at N31. Disulfide bonds link C79-C88, C111-C119, C252-C377, C268-C322, C340-C364, C482-C499, C488-C533, C491-C508, and C502-C514. N-linked (GlcNAc...) asparagine glycosylation is present at N334. The N-linked (GlcNAc...) asparagine glycan is linked to N543. A disulfide bond links C570 and C588. Disordered stretches follow at residues 671-829 (MVAS…TTFP) and 849-884 (LPEA…PPAP). Pro residues predominate over residues 681–697 (SPDPPARGGPSPSPPTA). Composition is skewed to low complexity over residues 698-710 (PKAL…DTLP) and 734-754 (SPWG…TGSP). 3 consecutive IPT/TIG domains span residues 1070 to 1160 (PLIH…FAYQ), 1162 to 1249 (PKVH…FKYT), and 1252 to 1375 (PNIT…FSYE). N-linked (GlcNAc...) asparagine glycans are attached at residues N1183, N1253, and N1330. The helical transmembrane segment at 1491-1511 (VGLGVGTSLLALGVIIIVLMY) threads the bilayer. Residues 1507–1539 (IVLMYRRKSKQALRDYKKVQIQLENLESSVRDR) are a coiled coil. The Cytoplasmic segment spans residues 1512–2135 (RRKSKQALRD…AAVENKVTDL (624 aa)). The tract at residues 1883-1908 (PWHLVKPSDEPEPPRPRRGSLRGGER) is disordered. Basic and acidic residues predominate over residues 1888 to 1897 (KPSDEPEPPR).

Belongs to the plexin family. In terms of assembly, monomer, and heterodimer with PLXNB2 after proteolytic processing. Binds RAC1 that has been activated by GTP binding. Interaction with SEMA4D promotes binding of cytoplasmic ligands. Interacts with PLXNA1. Interacts with ARHGEF11 and ARHGEF12. Interacts with ERBB2. Interacts with MET. Interacts with MST1R. Interacts with RRAS. Interacts with RHOD. Interacts with RND1. Interacts with NRP1 and NRP2. Phosphorylated on tyrosine residues by ERBB2 and MET upon SEMA4D binding. Post-translationally, proteolytic processing favors heterodimerization with PLXNB2 and SEMA4D binding. Highly expressed in fetal kidney, and at slightly lower levels in fetal brain, lung and liver.

It is found in the cell membrane. The protein resides in the secreted. Receptor for SEMA4D. Plays a role in GABAergic synapse development. Mediates SEMA4A- and SEMA4D-dependent inhibitory synapse development. Plays a role in RHOA activation and subsequent changes of the actin cytoskeleton. Plays a role in axon guidance, invasive growth and cell migration. This is Plexin-B1 (PLXNB1) from Homo sapiens (Human).